We begin with the raw amino-acid sequence, 535 residues long: Flavonoid 3'-monooxygenase CYP75B4 (535 aa).

Residues I8–V28 traverse the membrane as a helical segment. C469 lines the heme pocket.

Belongs to the cytochrome P450 family. Heme is required as a cofactor.

It localises to the membrane. It catalyses the reaction a 3'-unsubstituted flavone + reduced [NADPH--hemoprotein reductase] + O2 = a 3'-hydroxyflavone + oxidized [NADPH--hemoprotein reductase] + H2O + H(+). It functions in the pathway secondary metabolite biosynthesis; flavonoid biosynthesis. In terms of biological role, catalyzes the 3'-hydroxylation of the flavonoid B-ring to the 3',4'-hydroxylated state. Catalyzes in vitro 3'-hydroxylation of different flavonoids. Catalyzes the conversion of apigenin to luteolin, naringenin to eriodictyol, and kaempferol to quercetin. Possesses specific 5'-hydroxylase activity toward chrysoeriol (a 3'-methoxylated flavone) and is indispensable for tricin formation. Converts chrysoeriol to selgin, a precursor of tricin, suggesting that chrysoeriol, instead of tricetin, is an intermediate in tricin biosynthesis. This chain is Flavonoid 3'-monooxygenase CYP75B4, found in Oryza sativa subsp. japonica (Rice).